We begin with the raw amino-acid sequence, 576 residues long: Arginine--tRNA ligase (576 aa).

Positions 126–136 (ANPTGPMHIGH) match the 'HIGH' region motif.

This sequence belongs to the class-I aminoacyl-tRNA synthetase family. Monomer.

The protein localises to the cytoplasm. The catalysed reaction is tRNA(Arg) + L-arginine + ATP = L-arginyl-tRNA(Arg) + AMP + diphosphate. The sequence is that of Arginine--tRNA ligase from Rickettsia felis (strain ATCC VR-1525 / URRWXCal2) (Rickettsia azadi).